The following is a 150-amino-acid chain: 3-hydroxyacyl-[acyl-carrier-protein] dehydratase FabZ (150 aa).

His52 is an active-site residue.

The protein belongs to the thioester dehydratase family. FabZ subfamily.

Its subcellular location is the cytoplasm. It carries out the reaction a (3R)-hydroxyacyl-[ACP] = a (2E)-enoyl-[ACP] + H2O. Its function is as follows. Involved in unsaturated fatty acids biosynthesis. Catalyzes the dehydration of short chain beta-hydroxyacyl-ACPs and long chain saturated and unsaturated beta-hydroxyacyl-ACPs. The chain is 3-hydroxyacyl-[acyl-carrier-protein] dehydratase FabZ from Variovorax paradoxus (strain S110).